Here is a 376-residue protein sequence, read N- to C-terminus: Lysocardiolipin acyltransferase 1 (376 aa).

The helical transmembrane segment at 9-29 threads the bilayer; that stretch reads FILFLFAGSFFGSIFMLGPIL. An N-linked (GlcNAc...) asparagine glycan is attached at asparagine 35. The helical transmembrane segment at 48 to 68 threads the bilayer; the sequence is ATWLTLPVALLETMFGVRVVI. The HXXXXD motif signature appears at 85 to 90; that stretch reads HRTRVD. At lysine 183 the chain carries N6-acetyllysine. 2 helical membrane passes run 309 to 329 and 336 to 356; these read LLSI…IYLY and FIIS…LEII.

It belongs to the 1-acyl-sn-glycerol-3-phosphate acyltransferase family. Widely expressed with highest expression in heart, liver and 12.5 dpc aorta-gonad-mesonephros and lower levels in the 16 dpc fetal liver and adult bone marrow. In bone marrow, highest levels are found in B-cells compared with whole bone marrow, T-cells, erythrocytes, and granulocytes.

Its subcellular location is the endoplasmic reticulum membrane. The enzyme catalyses a 1-acyl-sn-glycero-3-phosphate + an acyl-CoA = a 1,2-diacyl-sn-glycero-3-phosphate + CoA. It carries out the reaction a 1-acyl-sn-glycero-3-phospho-(1D-myo-inositol) + an acyl-CoA = a 1,2-diacyl-sn-glycero-3-phospho-(1D-myo-inositol) + CoA. The catalysed reaction is 1-acyl-sn-glycero-3-phospho-(1'-sn-glycerol) + an acyl-CoA = a 1,2-diacyl-sn-glycero-3-phospho-(1'-sn-glycerol) + CoA. It catalyses the reaction 1-hexadecanoyl-sn-glycero-3-phosphate + (9Z)-octadecenoyl-CoA = 1-hexadecanoyl-2-(9Z-octadecenoyl)-sn-glycero-3-phosphate + CoA. The enzyme catalyses 1-(9Z-octadecenoyl)-sn-glycero-3-phosphate + (9Z)-octadecenoyl-CoA = 1,2-di-(9Z-octadecenoyl)-sn-glycero-3-phosphate + CoA. It carries out the reaction 1-(9Z,12Z)-octadecadienoyl-sn-glycero-3-phosphate + (9Z)-octadecenoyl-CoA = 1-(9Z,12Z)-octadecadienoyl-2-(9Z)-octadecenoyl-sn-glycero-3-phosphate + CoA. The catalysed reaction is 1-(9Z,12Z,15Z)-octadecatrienoyl-sn-glycero-3-phosphate + (9Z)-octadecenoyl-CoA = 1-(9Z,12Z,15Z)-octadecatrienoyl-2-(9Z)-octadecenoyl-sn-glycero-3-phosphate + CoA. It catalyses the reaction 1-(9Z-octadecenoyl)-sn-glycero-3-phosphate + hexadecanoyl-CoA = 1-(9Z)-octadecenoyl-2-hexadecanoyl-sn-glycero-3-phosphate + CoA. The enzyme catalyses 1-(9Z-octadecenoyl)-sn-glycero-3-phosphate + octadecanoyl-CoA = 1-(9Z-octadecenoyl)-2-octadecanoyl-sn-glycero-3-phosphate + CoA. It carries out the reaction 1-acyl-sn-glycero-3-phospho-(1'-sn-glycerol) + (9Z)-octadecenoyl-CoA = 1-acyl-2-(9Z-octadecenoyl)-sn-glycero-3-phospho-(1'-sn-glycerol) + CoA. The catalysed reaction is a 1-acyl-sn-glycero-3-phospho-(1D-myo-inositol) + (9Z)-octadecenoyl-CoA = a 1-acyl-2-(9Z-octadecenoyl)-sn-glycero-3-phospho-(1D-myo-inositol) + CoA. It catalyses the reaction 1-hexadecanoyl-sn-glycero-3-phospho-(1D-myo-inositol) + hexadecanoyl-CoA = 1,2-dihexadecanoyl-sn-glycero-3-phospho-(1D-myo-inositol) + CoA. The enzyme catalyses 1-hexadecanoyl-sn-glycero-3-phospho-(1D-myo-inositol) + octadecanoyl-CoA = 1-hexadecanoyl-2-octadecanoyl-sn-glycero-3-phospho-(1D-myo-inositol) + CoA. It carries out the reaction 1-hexadecanoyl-sn-glycero-3-phospho-(1D-myo-inositol) + (9Z)-octadecenoyl-CoA = 1-hexadecanoyl-2-(9Z-octadecenoyl)-sn-glycero-3-phospho-(1D-myo-inositol) + CoA. The catalysed reaction is 1-hexadecanoyl-sn-glycero-3-phospho-(1D-myo-inositol) + (9Z,12Z)-octadecadienoyl-CoA = 1-hexadecanoyl-2-(9Z,12Z-octadecadienoyl)-sn-glycero-3-phospho-(1D-myo-inositol) + CoA. It catalyses the reaction 1-hexadecanoyl-sn-glycero-3-phospho-(1D-myo-inositol) + (5Z,8Z,11Z,14Z)-eicosatetraenoyl-CoA = 1-hexadecanoyl-2-(5Z,8Z,11Z,14Z-eicosatetraenoyl)-sn-glycero-3-phospho-D-myo-inositol + CoA. The enzyme catalyses 1-hexadecanoyl-sn-glycero-3-phospho-(1'-sn-glycerol) + hexadecanoyl-CoA = 1,2-dihexadecanoyl-sn-glycero-3-phospho-(1'-sn-glycerol) + CoA. It carries out the reaction 1-hexadecanoyl-sn-glycero-3-phospho-(1'-sn-glycerol) + octadecanoyl-CoA = 1-hexadecanoyl-2-octadecanoyl-sn-glycero-3-phospho-(1'-sn-glycerol) + CoA. The catalysed reaction is 1-hexadecanoyl-sn-glycero-3-phospho-(1'-sn-glycerol) + (9Z)-octadecenoyl-CoA = 1-hexadecanoyl-2-(9Z-octadecenoyl)-sn-glycero-3-phospho-(1'-sn-glycerol) + CoA. It catalyses the reaction 1-hexadecanoyl-sn-glycero-3-phospho-(1'-sn-glycerol) + (9Z,12Z)-octadecadienoyl-CoA = 1-hexadecanoyl-2-(9Z,12Z-octadecadienoyl)-sn-glycero-3-phospho-(1'-sn-glycerol) + CoA. The enzyme catalyses 1-tetradecanoyl-sn-glycero-3-phospho-(1'-sn-glycerol) + (9Z)-octadecenoyl-CoA = 1-tetradecanoyl-2-(9Z-octadecenoyl)-sn-glycero-3-phospho-(1'-sn-glycerol) + CoA. It carries out the reaction 1-octadecanoyl-sn-glycero-3-phospho-(1'-sn-glycerol) + (9Z)-octadecenoyl-CoA = 1-octadecanoyl-2-(9Z-octadecenoyl)-sn-glycero-3-phospho-(1'-sn-glycerol) + CoA. The catalysed reaction is 1-(9Z-octadecenoyl)-sn-glycero-3-phospho-(1'-sn-glycerol) + (9Z)-octadecenoyl-CoA = 1,2-di-(9Z-octadecenoyl)-sn-glycero-3-phospho-(1'-sn-glycerol) + CoA. It catalyses the reaction 1-hexadecanoyl-sn-glycero-3-phospho-(1D-myo-inositol) + dodecanoyl-CoA = 1-hexadecanoyl-2-dodecanoyl-sn-glycero-3-phospho-(1D-myo-inositol) + CoA. The enzyme catalyses 1',3'-bis-[1-acyl-sn-glycero-3-phospho]-glycerol + (9Z)-octadecenoyl-CoA = 1'-[1-acyl-2-(9Z)-octadecenoyl-sn-glycero-3-phospho],3'-[1-acyl,2-hydroxy-sn-glycero-3-phospho]-glycerol + CoA. It carries out the reaction 1'-[1,2-diacyl-sn-glycero-3-phospho],3'-[1-acyl-sn-glycero-3-phospho]-glycerol + (9Z)-octadecenoyl-CoA = 1'-[1,2-diacyl-sn-glycero-3-phospho],3'-[1-acyl,2-(9Z)-octadecenoyl-sn-glycero-3-phospho]-glycerol + CoA. The catalysed reaction is 1'-[1,2-diacyl-sn-glycero-3-phospho],3'-[1-acyl-sn-glycero-3-phospho]-glycerol + (9Z,12Z)-octadecadienoyl-CoA = 1'-[1,2-diacyl-sn-glycero-3-phospho],3'-[1-acyl,2-(9Z,12Z)-octadecadienoyl-sn-glycero-3-phospho]-glycerol + CoA. It catalyses the reaction 1'-[1,2-diacyl-sn-glycero-3-phospho],3'-[1-acyl-sn-glycero-3-phospho]-glycerol + dodecanoyl-CoA = 1'-[1,2-diacyl-sn-glycero-3-phospho],3'-[1-acyl,2-dodecanoyl-sn-glycero-3-phospho]-glycerol + CoA. The enzyme catalyses 1',3'-bis-[1-acyl-sn-glycero-3-phospho]-glycerol + dodecanoyl-CoA = 1'-[1-acyl-2-dodecanoyl-sn-glycero-3-phospho],3'-[1-acyl,2-hydroxy-sn-glycero-3-phospho]-glycerol + CoA. It carries out the reaction a 1-acyl-sn-glycero-3-phosphate + (9Z)-octadecenoyl-CoA = a 1-acyl-2-(9Z-octadecenoyl)-sn-glycero-3-phosphate + CoA. The catalysed reaction is 1',3'-bis-[1-acyl-sn-glycero-3-phospho]-glycerol + (9Z,12Z)-octadecadienoyl-CoA = 1'-[1-acyl-2-(9Z,12Z)-octadecadienoyl-sn-glycero-3-phospho],3'-[1-acyl,2-hydroxy-sn-glycero-3-phospho]-glycerol + CoA. It catalyses the reaction 1',3'-bis-[1-acyl-sn-glycero-3-phospho]-glycerol + hexadecanoyl-CoA = 1'-[1-acyl-2-hexadecanoyl-sn-glycero-3-phospho],3'-[1-acyl,2-hydroxy-sn-glycero-3-phospho]-glycerol + CoA. The enzyme catalyses 1',3'-bis-[1-acyl-sn-glycero-3-phospho]-glycerol + octadecanoyl-CoA = 1'-[1-acyl-2-octadecanoyl-sn-glycero-3-phospho],3'-[1-acyl,2-hydroxy-sn-glycero-3-phospho]-glycerol + CoA. It carries out the reaction 1'-[1,2-diacyl-sn-glycero-3-phospho],3'-[1-acyl-sn-glycero-3-phospho]-glycerol + octanoyl-CoA = 1'-[1,2-diacyl-sn-glycero-3-phospho],3'-[1-acyl,2-octanoyl-sn-glycero-3-phospho]-glycerol + CoA. The catalysed reaction is 1',3'-bis-[1-acyl-sn-glycero-3-phospho]-glycerol + octanoyl-CoA = 1'-[1-acyl-2-octanoyl-sn-glycero-3-phospho],3'-[1-acyl,2-hydroxy-sn-glycero-3-phospho]-glycerol + CoA. It catalyses the reaction 1'-[1,2-diacyl-sn-glycero-3-phospho],3'-[1-acyl-sn-glycero-3-phospho]-glycerol + hexadecanoyl-CoA = 1'-[1,2-diacyl-sn-glycero-3-phospho],3'-[1-acyl,2-hexadecanoyl-sn-glycero-3-phospho]-glycerol + CoA. The enzyme catalyses 1'-[1,2-diacyl-sn-glycero-3-phospho],3'-[1-acyl-sn-glycero-3-phospho]-glycerol + (5Z,8Z,11Z,14Z)-eicosatetraenoyl-CoA = 1'-[1,2-diacyl-sn-glycero-3-phospho],3'-[1-acyl,2-(5Z,8Z,11Z,14Z)-eicosatetraenoyl-sn-glycero-3-phospho]-glycerol + CoA. It carries out the reaction 1',3'-bis-[1-acyl-sn-glycero-3-phospho]-glycerol + (5Z,8Z,11Z,14Z)-eicosatetraenoyl-CoA = 1'-[1-acyl-2-(5Z,8Z,11Z,14Z)-eicosatetraenoyl-sn-glycero-3-phospho],3'-[1-acyl,2-hydroxy-sn-glycero-3-phospho]-glycerol + CoA. The catalysed reaction is a 1-acyl-sn-glycero-3-phospho-(1D-myo-inositol) + octadecanoyl-CoA = a 1-acyl-2-octadecanoyl-sn-glycero-3-phospho-(1D-myo-inositol) + CoA. It catalyses the reaction a 2-acyl-sn-glycero-3-phospho-D-myo-inositol + octadecanoyl-CoA = 1-octadecanoyl-2-acyl-sn-glycero-3-phospho-1D-myo-inositol + CoA. The protein operates within phospholipid metabolism; CDP-diacylglycerol biosynthesis; CDP-diacylglycerol from sn-glycerol 3-phosphate: step 2/3. Its function is as follows. Exhibits acyl-CoA:lysocardiolipin acyltransferase (ALCAT) activity; catalyzes the reacylation of lyso-cardiolipin to cardiolipin (CL), a key step in CL remodeling. Recognizes both monolysocardiolipin and dilysocardiolipin as substrates with a preference for linoleoyl-CoA and oleoyl-CoA as acyl donors. Also exhibits 1-acyl-sn-glycerol-3-phosphate acyltransferase activity (AGPAT) activity; converts 1-acyl-sn-glycerol-3- phosphate (lysophosphatidic acid or LPA) into 1,2-diacyl-sn-glycerol-3- phosphate (phosphatidic acid or PA) by incorporating an acyl moiety at the sn-2 position of the glycerol backbone. Possesses lysophosphatidylinositol acyltransferase (LPIAT) activity. Possesses lysophosphatidylglycerol acyltransferase (LPGAT) activity. Required for establishment of the hematopoietic and endothelial lineages. The polypeptide is Lysocardiolipin acyltransferase 1 (Lclat1) (Mus musculus (Mouse)).